The chain runs to 97 residues: MHGNYPTLKEIVLELDPPDPVGLHCNEQLDSSEDEVDELATQATQDVTQPYQIVTTCGTCNRNVRLVVQCTGTDICQLHTLLLGSLEILCPVCAPKN.

Residues 1-41 form an E7 terminal domain region; sequence MHGNYPTLKEIVLELDPPDPVGLHCNEQLDSSEDEVDELAT. The LXCXE motif; interaction with host RB1 and TMEM173/STING signature appears at 23–27; it reads LHCNE. A zinc finger spans residues 57-93; it reads CGTCNRNVRLVVQCTGTDICQLHTLLLGSLEILCPVC. Residues 75–83 carry the Nuclear export signal motif; sequence ICQLHTLLL.

It belongs to the papillomaviridae E7 protein family. As to quaternary structure, homodimer. Homooligomer. Interacts with host RB1; this interaction induces dissociation of RB1-E2F1 complex thereby disrupting RB1 activity. Interacts with host EP300; this interaction represses EP300 transcriptional activity. Interacts with protein E2; this interaction inhibits E7 oncogenic activity. Interacts with host TMEM173/STING; this interaction impairs the ability of TMEM173/STING to sense cytosolic DNA and promote the production of type I interferon (IFN-alpha and IFN-beta). In terms of processing, highly phosphorylated.

Its subcellular location is the host cytoplasm. The protein resides in the host nucleus. Functionally, plays a role in viral genome replication by driving entry of quiescent cells into the cell cycle. Stimulation of progression from G1 to S phase allows the virus to efficiently use the cellular DNA replicating machinery to achieve viral genome replication. E7 protein has both transforming and trans-activating activities. Induces the disassembly of the E2F1 transcription factor from RB1, with subsequent transcriptional activation of E2F1-regulated S-phase genes. Interferes with host histone deacetylation mediated by HDAC1 and HDAC2, leading to transcription activation. Also plays a role in the inhibition of both antiviral and antiproliferative functions of host interferon alpha. Interaction with host TMEM173/STING impairs the ability of TMEM173/STING to sense cytosolic DNA and promote the production of type I interferon (IFN-alpha and IFN-beta). The protein is Protein E7 of Homo sapiens (Human).